A 700-amino-acid chain; its full sequence is MLTDLHKVRNIGIMAHIDAGKTTTTERILFYTGVNHKLGETHDGASTTDWMEQEKERGITITSAAVTCFWNKNQINIIDTPGHVDFTVEVERSLRVLDGAVAVFDAKEGVEPQSETVWRQADKYVVPRICFVNKMDKLGADFYFTVDTIISRLGAKPLVMQLPIGSESEFIGVVDLIEMRALVWPGDAKGDVTMGAKYEVQEIPADLQAKAEEYRAKLVETVAESDDALLEKFFGGEELTVAEIKGAIRTMTVNNEIYPVLCGSAFKNRGVQPMLDAVIDYLPSPLDVPAIEAHDPRDEEKVILRHADATEPFSALAFKVAVHPFFGRLTYVRIYSGRVDSGAQVINSTKGRKERIGKIFQMHANKENPVDFVTAGNIYAVIGLKDTTTGDTLSDPANEVVLESMTFPEPVIEVAIEPKTKADQEKLGTAIQKLAEEDPTFRTEQNQETGQTVIKGMGELHLDILVDRMKREFNVEANVGKPQVAYRETLRRTVEKHDYTHKKQTGGSGQFAKVQITLEPLEVTPETSYEFVNAVTGGRVPREYIPSVDAGIQDAMQVGVLAGFPTVGVKATLVDGASHDVDSSEMAFKIAGSMAYKEAARKANPVLLEPLMAVEVRTPEEYMGDVIGDLNSRRGQIQSMEDASGVKVVKVNVPLSEMFGYIGDLRSKTSGRAVYSMQFDSYAEVPKAVADEIVQKSKGE.

Residues 6–286 (HKVRNIGIMA…AVIDYLPSPL (281 aa)) enclose the tr-type G domain. GTP contacts are provided by residues 15-22 (AHIDAGKT), 79-83 (DTPGH), and 133-136 (NKMD).

This sequence belongs to the TRAFAC class translation factor GTPase superfamily. Classic translation factor GTPase family. EF-G/EF-2 subfamily.

The protein resides in the cytoplasm. Its function is as follows. Catalyzes the GTP-dependent ribosomal translocation step during translation elongation. During this step, the ribosome changes from the pre-translocational (PRE) to the post-translocational (POST) state as the newly formed A-site-bound peptidyl-tRNA and P-site-bound deacylated tRNA move to the P and E sites, respectively. Catalyzes the coordinated movement of the two tRNA molecules, the mRNA and conformational changes in the ribosome. This is Elongation factor G from Leifsonia xyli subsp. xyli (strain CTCB07).